A 620-amino-acid chain; its full sequence is Rpb7-binding protein seb1 (620 aa).

The 151-residue stretch at 1–151 (MSGIAEFDGI…SLRSKLKDAM (151 aa)) folds into the CID domain. 2 disordered regions span residues 151-191 (MAST…RPVE) and 327-398 (SVPL…TIPP). Ser-343 is modified (phosphoserine). The segment covering 361-374 (PSPSHLSIPSTLPP) has biased composition (low complexity). The 73-residue stretch at 406-478 (RTLFLGGITR…TTIRTKWGVG (73 aa)) folds into the RRM domain. Residues 558–620 (RGRKPYRGGP…YVSQPPWQPQ (63 aa)) are disordered. Residues 570-580 (HHGERHFDSGN) are compositionally biased toward basic and acidic residues.

As to quaternary structure, interacts with rpb7.

It is found in the nucleus. Its function is as follows. Involved in the processing of pol II transcripts. This Schizosaccharomyces pombe (strain 972 / ATCC 24843) (Fission yeast) protein is Rpb7-binding protein seb1 (seb1).